A 332-amino-acid chain; its full sequence is MAAVFLVTLYEYSPLFYIAVVFTCFIATTGLVLGWLGWDVPVILRNSEETQFSTRAFKKQMRQVKNPFGLEITNSSAASLATGVTLTTDCLEDSRLTCYWGCSVQKLYEALQKHVYCFRISTPQALEEALYSDYLHREQYFIKKHSKEEIYCQLPSSTGVEDFGPVPRSRYPLVALLTLADEDDREIYDIISMVSVIHIPDKTYKLPCRILYQYLILAQGQFYDLKQLFMSANNSATPSRDQSPADGSVEHSLLEKAGLAGAEVDPVEESSKDCVVCQNGGVNWVLLPCRHACLCDSCVCYFKQCPMCRQFVQESFALCGQKEADKDILETS.

Residues 274–309 form an RING-type zinc finger; the sequence is CVVCQNGGVNWVLLPCRHACLCDSCVCYFKQCPMCR.

As to expression, highly expressed in testis, lower levels of expression is seen in skeletal muscle, liver, lung and brain.

It localises to the nucleus. It is found in the endoplasmic reticulum. In terms of biological role, able to inhibit growth in several cell lines. This is Cell growth regulator with RING finger domain protein 1 (Cgrrf1) from Rattus norvegicus (Rat).